The sequence spans 367 residues: DNA replication and repair protein RecF (367 aa).

30–37 is an ATP binding site; sequence GANGSGKT.

It belongs to the RecF family.

It localises to the cytoplasm. Functionally, the RecF protein is involved in DNA metabolism; it is required for DNA replication and normal SOS inducibility. RecF binds preferentially to single-stranded, linear DNA. It also seems to bind ATP. This chain is DNA replication and repair protein RecF, found in Pseudomonas putida (strain W619).